Consider the following 308-residue polypeptide: Palmitoyltransferase ZDHHC7 (308 aa).

Residues 1–50 are Cytoplasmic-facing; it reads MQPSGHRLRDIEHHPLLTDNDNYDSASSSSSETDMADRVWFIRDGCGMVC. A helical transmembrane segment spans residues 51–71; that stretch reads AVMTWLLVVYADFVVTFVMLL. Residues 72 to 75 lie on the Lumenal side of the membrane; sequence PSKD. A helical transmembrane segment spans residues 76-96; it reads FWYSVVNGVLFNCLAVLALSS. Over 97–173 the chain is Cytoplasmic; sequence HLRTMLTDPG…NNCVGEKNQR (77 aa). In terms of domain architecture, DHHC spans 130–180; it reads YKCPKCCCIKPERAHHCSICKRCIRKMDHHCPWVNNCVGEKNQRFFVLFTM. Cys160 serves as the catalytic S-palmitoyl cysteine intermediate. The helical transmembrane segment at 174–194 threads the bilayer; that stretch reads FFVLFTMYIALSSVHALILCG. Residues 195 to 217 lie on the Lumenal side of the membrane; that stretch reads LQFISCVRGQWTECSDFSPPITV. A helical membrane pass occupies residues 218–238; it reads ILLVFLCLEGLLFFTFTAVMF. At 239-308 the chain is on the cytoplasmic side; the sequence is GTQIHSICND…TRKGGPEFSV (70 aa).

This sequence belongs to the DHHC palmitoyltransferase family. As to quaternary structure, homooligomers. Heterooligomers with ZDHHC3. Autopalmitoylated. As to expression, ubiquitously expressed, with highest levels in liver, kidney and brain. Expressed in all brain regions.

The protein resides in the golgi apparatus membrane. It carries out the reaction L-cysteinyl-[protein] + hexadecanoyl-CoA = S-hexadecanoyl-L-cysteinyl-[protein] + CoA. The enzyme catalyses L-cysteinyl-[protein] + tetradecanoyl-CoA = S-tetradecanoyl-L-cysteinyl-[protein] + CoA. It catalyses the reaction L-cysteinyl-[protein] + octadecanoyl-CoA = S-octadecanoyl-L-cysteinyl-[protein] + CoA. Golgi-localized palmitoyltransferase that catalyzes the addition of palmitate onto various protein substrates and therefore functions in several unrelated biological processes. Has no stringent fatty acid selectivity and in addition to palmitate can also transfer onto target proteins myristate from tetradecanoyl-CoA and stearate from octadecanoyl-CoA. Palmitoylates sex steroid hormone receptors, including ESR1, PGR and AR, thereby regulating their targeting to the plasma membrane and their function in rapid intracellular signaling upon binding of sex hormones. Palmitoylates GNAQ, a heterotrimeric G protein, regulating its dynamic localization at the plasma membrane and is thereby involved in GNAQ-dependent G protein-coupled receptor signaling pathways. Also functions in ligand-induced cell death by regulating the FAS signaling pathway through the palmitoylation and stabilization of the receptor at the plasma membrane. In epithelial cells, palmitoylates SCRIB and regulates its localization to the plasma membrane, regulating indirectly cell polarity and differentiation. Also palmitoylates JAM3 and promotes its expression at tight junctions and regulates its function in cell migration. Palmitoylates the glucose transporter GLUT4/SLC2A4 and controls the insulin-dependent translocation of GLUT4 to the plasma membrane. In brain, could also palmitoylate SNAP25 and DLG4/PSD95. Could also palmitoylate DNAJC5 and regulate its localization to the Golgi membrane. Could also palmitoylate NCDN. May play a role in follicle stimulation hormone (FSH) activation of testicular Sertoli cells. Activates pyroptosis by catalyzing palmitoylation of gasdermin-D (GSDMD). In Mus musculus (Mouse), this protein is Palmitoyltransferase ZDHHC7.